Consider the following 182-residue polypeptide: Ribosome maturation factor RimM (182 aa).

The region spanning 103–182 (EDDYYWKDLM…RVEVDWDPGF (80 aa)) is the PRC barrel domain.

Belongs to the RimM family. As to quaternary structure, binds ribosomal protein uS19.

It localises to the cytoplasm. Functionally, an accessory protein needed during the final step in the assembly of 30S ribosomal subunit, possibly for assembly of the head region. Essential for efficient processing of 16S rRNA. May be needed both before and after RbfA during the maturation of 16S rRNA. It has affinity for free ribosomal 30S subunits but not for 70S ribosomes. The chain is Ribosome maturation factor RimM from Yersinia pestis (strain Pestoides F).